We begin with the raw amino-acid sequence, 263 residues long: Dermonecrotic toxin SpaSicTox-betaIF1 (263 aa).

Mg(2+) is bound by residues Glu-15 and Asp-17. Catalysis depends on His-31, which acts as the Nucleophile. 2 cysteine pairs are disulfide-bonded: Cys-35–Cys-41 and Cys-37–Cys-179. Residue Asp-75 participates in Mg(2+) binding.

Belongs to the arthropod phospholipase D family. Class II subfamily. Requires Mg(2+) as cofactor. Expressed by the venom gland.

It localises to the secreted. It catalyses the reaction an N-(acyl)-sphingosylphosphocholine = an N-(acyl)-sphingosyl-1,3-cyclic phosphate + choline. The catalysed reaction is an N-(acyl)-sphingosylphosphoethanolamine = an N-(acyl)-sphingosyl-1,3-cyclic phosphate + ethanolamine. The enzyme catalyses a 1-acyl-sn-glycero-3-phosphocholine = a 1-acyl-sn-glycero-2,3-cyclic phosphate + choline. It carries out the reaction a 1-acyl-sn-glycero-3-phosphoethanolamine = a 1-acyl-sn-glycero-2,3-cyclic phosphate + ethanolamine. Dermonecrotic toxins cleave the phosphodiester linkage between the phosphate and headgroup of certain phospholipids (sphingolipid and lysolipid substrates), forming an alcohol (often choline) and a cyclic phosphate. This toxin acts on sphingomyelin (SM). It may also act on ceramide phosphoethanolamine (CPE), lysophosphatidylcholine (LPC) and lysophosphatidylethanolamine (LPE), but not on lysophosphatidylserine (LPS), and lysophosphatidylglycerol (LPG). It acts by transphosphatidylation, releasing exclusively cyclic phosphate products as second products. Induces dermonecrosis, hemolysis, increased vascular permeability, edema, inflammatory response, and platelet aggregation. The sequence is that of Dermonecrotic toxin SpaSicTox-betaIF1 from Sicarius patagonicus (Six-eyed sand spider).